Here is a 244-residue protein sequence, read N- to C-terminus: Na(+)-translocating NADH-quinone reductase subunit E (244 aa).

6 consecutive transmembrane segments (helical) span residues 11 to 31, 50 to 70, 90 to 110, 123 to 143, 153 to 173, and 191 to 211; these read LLGI…TFLG, MSVA…HYFI, FLEL…LEVL, GIFL…LFGI, VVFS…FATI, and ISFI…GIDI. A compositionally biased stretch (polar residues) spans 222-236; it reads VTNIATDSPQPNTHS. A disordered region spans residues 222 to 244; it reads VTNIATDSPQPNTHSSSEEPKAS.

Belongs to the NqrDE/RnfAE family. As to quaternary structure, composed of six subunits; NqrA, NqrB, NqrC, NqrD, NqrE and NqrF.

It localises to the cell inner membrane. It carries out the reaction a ubiquinone + n Na(+)(in) + NADH + H(+) = a ubiquinol + n Na(+)(out) + NAD(+). NQR complex catalyzes the reduction of ubiquinone-1 to ubiquinol by two successive reactions, coupled with the transport of Na(+) ions from the cytoplasm to the periplasm. NqrA to NqrE are probably involved in the second step, the conversion of ubisemiquinone to ubiquinol. This is Na(+)-translocating NADH-quinone reductase subunit E from Chlamydia trachomatis serovar A (strain ATCC VR-571B / DSM 19440 / HAR-13).